Reading from the N-terminus, the 127-residue chain is Holo-[acyl-carrier-protein] synthase (127 aa).

2 residues coordinate Mg(2+): aspartate 9 and glutamate 58.

This sequence belongs to the P-Pant transferase superfamily. AcpS family. It depends on Mg(2+) as a cofactor.

It localises to the cytoplasm. It carries out the reaction apo-[ACP] + CoA = holo-[ACP] + adenosine 3',5'-bisphosphate + H(+). Its function is as follows. Transfers the 4'-phosphopantetheine moiety from coenzyme A to a Ser of acyl-carrier-protein. The sequence is that of Holo-[acyl-carrier-protein] synthase from Shewanella baltica (strain OS185).